Reading from the N-terminus, the 459-residue chain is Argininosuccinate lyase (459 aa).

This sequence belongs to the lyase 1 family. Argininosuccinate lyase subfamily.

The protein resides in the cytoplasm. It carries out the reaction 2-(N(omega)-L-arginino)succinate = fumarate + L-arginine. The protein operates within amino-acid biosynthesis; L-arginine biosynthesis; L-arginine from L-ornithine and carbamoyl phosphate: step 3/3. This is Argininosuccinate lyase from Chromobacterium violaceum (strain ATCC 12472 / DSM 30191 / JCM 1249 / CCUG 213 / NBRC 12614 / NCIMB 9131 / NCTC 9757 / MK).